Here is a 160-residue protein sequence, read N- to C-terminus: Type IV major fimbrial protein FimA (160 aa).

Positions 1–7 (MKSLQKG) are cleaved as a propeptide — leader sequence. Residue Phe-8 is modified to N-methylphenylalanine. Residues 8–28 (FTLIELMIVVAIIGILAAFAI) form a helical membrane-spanning segment. A disulfide bridge links Cys-63 with Cys-106.

This sequence belongs to the N-Me-Phe pilin family. As to quaternary structure, the pili are polar flexible filaments of about 5.4 nanometers diameter and 2.5 micrometers average length; they consist of only a single polypeptide chain arranged in a helical configuration of five subunits per turn in the assembled pilus.

Its subcellular location is the fimbrium. It localises to the membrane. Its function is as follows. Major component of the type IV fimbriae that plays an essential role in twitching motility, natural transformation, and protease secretion. The protein is Type IV major fimbrial protein FimA (fimA) of Dichelobacter nodosus (Bacteroides nodosus).